The primary structure comprises 271 residues: Serine O-acetyltransferase (271 aa).

Cys-112 acts as the Acyl-thioester intermediate in catalysis. His-204 serves as the catalytic Proton acceptor. Glu-206 is a catalytic residue.

It belongs to the MetA family.

The catalysed reaction is L-serine + acetyl-CoA = O-acetyl-L-serine + CoA. It functions in the pathway amino-acid biosynthesis; L-cysteine biosynthesis; L-cysteine from L-serine: step 1/2. Functionally, catalyzes the formation of O-acetylserine (OAS) from L-serine and acetyl-CoA. To a lesser extent, is also able to use succinyl-CoA and propionyl-CoA as acyl donors, but not butyryl-CoA. Does not acylate D-serine and L-homoserine. This Lacticaseibacillus casei (Lactobacillus casei) protein is Serine O-acetyltransferase.